The sequence spans 469 residues: 2-oxoisovalerate dehydrogenase subunit beta, mitochondrial (469 aa).

A mitochondrion-targeting transit peptide spans 1-40 (MKRSTVVIRPSARALSRQASSQSFLLARSSALTSRQRRLY). Residue Y167 coordinates thiamine diphosphate. 3 residues coordinate K(+): G194, L196, and T197.

Heterotetramer of 2 alpha and 2 beta chains. Thiamine diphosphate is required as a cofactor.

The protein resides in the mitochondrion matrix. It catalyses the reaction N(6)-[(R)-lipoyl]-L-lysyl-[protein] + 3-methyl-2-oxobutanoate + H(+) = N(6)-[(R)-S(8)-2-methylpropanoyldihydrolipoyl]-L-lysyl-[protein] + CO2. The branched-chain alpha-keto dehydrogenase complex catalyzes the overall conversion of alpha-keto acids to acyl-CoA and CO(2). It contains multiple copies of three enzymatic components: branched-chain alpha-keto acid decarboxylase (E1), lipoamide acyltransferase (E2) and lipoamide dehydrogenase (E3). The protein is 2-oxoisovalerate dehydrogenase subunit beta, mitochondrial of Chaetomium thermophilum (strain DSM 1495 / CBS 144.50 / IMI 039719) (Thermochaetoides thermophila).